Consider the following 173-residue polypeptide: Beta-defensin 129 (173 aa).

A signal peptide spans 1 to 19 (MKLLFPIFASLMLQYKVNT). 3 disulfide bridges follow: C27–C53, C34–C48, and C38–C54. The disordered stretch occupies residues 144–173 (STKSNIKESRDSATASPPPAPPPPNTLPTP). Residues 159-173 (SPPPAPPPPNTLPTP) show a composition bias toward pro residues.

The protein belongs to the beta-defensin family.

The protein resides in the secreted. Its function is as follows. Has antibacterial activity. This Hylobates lar (Lar gibbon) protein is Beta-defensin 129 (DEFB129).